The chain runs to 333 residues: Dipeptide transport system permease protein DppB (333 aa).

The next 6 helical transmembrane spans lie at 10–30 (LLLI…IHLI), 99–119 (IELT…AGIV), 130–150 (YLSM…LALM), 197–217 (SIKH…AIIA), 256–276 (LIPV…GAIL), and 300–320 (PVIQ…NLFV). The ABC transmembrane type-1 domain occupies 95 to 324 (LAATIELTIF…LINLFVDLLY (230 aa)).

Belongs to the binding-protein-dependent transport system permease family. OppBC subfamily.

The protein resides in the cell membrane. In terms of biological role, probably part of the ABC transporter Dpp involved in dipeptide transport. Responsible for the translocation of the substrate across the membrane. This Alkalihalophilus pseudofirmus (strain ATCC BAA-2126 / JCM 17055 / OF4) (Bacillus pseudofirmus) protein is Dipeptide transport system permease protein DppB (dppB).